A 555-amino-acid chain; its full sequence is GPI-anchor transamidase component PIGS (555 aa).

The Cytoplasmic segment spans residues 2-18 (AAAGAAATDLEVVRGKR). 2 residues coordinate a cardiolipin: Arg-15 and Arg-18. The helical transmembrane segment at 19 to 39 (SALFFAAVAILLGLPLWWKTT) threads the bilayer. Topologically, residues 40–517 (ETYRAPLPYS…LHLLYFPDDQ (478 aa)) are lumenal. Residues Asn-267 and Asn-370 are each glycosylated (N-linked (GlcNAc...) asparagine). A helical membrane pass occupies residues 518–532 (KFAIYIPLFLPMAVP). At 533-555 (ILLSLVKIFQETRKSWKKPEKID) the chain is on the cytoplasmic side.

Belongs to the PIGS family. In terms of assembly, heteropentamer. Part of the GPI-anchor transamidase complex, consisting of PIGK, PIGT, PIGS, PIGU and GAA1.

It is found in the endoplasmic reticulum membrane. Its pathway is glycolipid biosynthesis; glycosylphosphatidylinositol-anchor biosynthesis. Its function is as follows. Component of the glycosylphosphatidylinositol-anchor (GPI-anchor) transamidase (GPI-T) complex that catalyzes the formation of the linkage between a proprotein and a GPI-anchor and participates in GPI anchored protein biosynthesis. The polypeptide is GPI-anchor transamidase component PIGS (Mus musculus (Mouse)).